Here is a 263-residue protein sequence, read N- to C-terminus: Undecaprenyl-diphosphatase 3 (263 aa).

8 helical membrane-spanning segments follow: residues 15–37 (GLTE…LIGF), 42–62 (AKVF…VIFW), 83–103 (LHII…HSAI), 106–126 (VLFG…LMIV), 142–162 (ITYK…WPGF), 183–203 (AEYT…LDLI), 216–236 (LFAT…VSFL), and 242–262 (VKLT…YFFI).

The protein belongs to the UppP family.

The protein resides in the cell membrane. The enzyme catalyses di-trans,octa-cis-undecaprenyl diphosphate + H2O = di-trans,octa-cis-undecaprenyl phosphate + phosphate + H(+). In terms of biological role, catalyzes the dephosphorylation of undecaprenyl diphosphate (UPP). Confers resistance to bacitracin. The protein is Undecaprenyl-diphosphatase 3 of Bacillus thuringiensis subsp. konkukian (strain 97-27).